Reading from the N-terminus, the 286-residue chain is Polyamine aminopropyltransferase (286 aa).

Residues 6 to 239 (PVWIDEVFED…GWWSWLYASD (234 aa)) form the PABS domain. Residue glutamine 34 coordinates S-methyl-5'-thioadenosine. Spermidine contacts are provided by histidine 65 and aspartate 89. Residues glutamate 109 and 140–141 (DG) contribute to the S-methyl-5'-thioadenosine site. Residue aspartate 159 is the Proton acceptor of the active site. 159–162 (DGSD) is a spermidine binding site. Proline 166 contributes to the S-methyl-5'-thioadenosine binding site.

It belongs to the spermidine/spermine synthase family. In terms of assembly, homodimer or homotetramer. Homodimer.

It localises to the cytoplasm. The enzyme catalyses S-adenosyl 3-(methylsulfanyl)propylamine + putrescine = S-methyl-5'-thioadenosine + spermidine + H(+). Its pathway is amine and polyamine biosynthesis; spermidine biosynthesis; spermidine from putrescine: step 1/1. Functionally, catalyzes the irreversible transfer of a propylamine group from the amino donor S-adenosylmethioninamine (decarboxy-AdoMet) to putrescine (1,4-diaminobutane) to yield spermidine. The protein is Polyamine aminopropyltransferase of Synechococcus elongatus (strain ATCC 33912 / PCC 7942 / FACHB-805) (Anacystis nidulans R2).